A 102-amino-acid chain; its full sequence is UPF0213 protein XCC3072 (102 aa).

The 76-residue stretch at 5-80 folds into the GIY-YIG domain; it reads KPWHLYLLLC…KQQPRARKLA (76 aa).

Belongs to the UPF0213 family.

In Xanthomonas campestris pv. campestris (strain ATCC 33913 / DSM 3586 / NCPPB 528 / LMG 568 / P 25), this protein is UPF0213 protein XCC3072.